The following is an 89-amino-acid chain: Small ribosomal subunit protein uS17 (89 aa).

This sequence belongs to the universal ribosomal protein uS17 family. In terms of assembly, part of the 30S ribosomal subunit.

Its function is as follows. One of the primary rRNA binding proteins, it binds specifically to the 5'-end of 16S ribosomal RNA. The sequence is that of Small ribosomal subunit protein uS17 from Leptospira interrogans serogroup Icterohaemorrhagiae serovar Lai (strain 56601).